The chain runs to 1247 residues: Nitric oxide synthase (1247 aa).

Residues 13–33 (EVAEGRESSKANHIGEERRGY) form a disordered region. Ser146 is a binding site for (6R)-L-erythro-5,6,7,8-tetrahydrobiopterin. Residue Cys224 participates in heme b binding. Gln287, Trp396, Tyr397, Glu401, and Asn406 together coordinate L-arginine. Residues Trp487 and Phe500 each contribute to the (6R)-L-erythro-5,6,7,8-tetrahydrobiopterin site. Tyr515 provides a ligand contact to heme b. The calmodulin-binding stretch occupies residues 537-557 (PRRKFNFKQIARAVKFTSKLF). The region spanning 567–766 (ATVLYATETG…AFRKWAPEVF (200 aa)) is the Flavodoxin-like domain. 712-743 (VFALGSSAYPNFCAFGKYIDNILGELGGERLM) provides a ligand contact to FMN. The 271-residue stretch at 795–1065 (NTVRYAPVAE…VRSAPSFHMS (271 aa)) folds into the FAD-binding FR-type domain. Residues 855–866 (YEPGDHVGIFPA) and 998–1008 (LQPRFYSISSS) contribute to the FAD site. NADP(+) is bound by residues 1073 to 1091 (ILIG…WQEW) and 1170 to 1185 (KGHI…AEHV).

This sequence belongs to the NOS family. The cofactor is heme b. FAD serves as cofactor. FMN is required as a cofactor.

It catalyses the reaction 2 L-arginine + 3 NADPH + 4 O2 + H(+) = 2 L-citrulline + 2 nitric oxide + 3 NADP(+) + 4 H2O. Its activity is regulated as follows. Stimulated by calcium/calmodulin. In terms of biological role, produces nitric oxide (NO) which is a messenger molecule with diverse functions throughout the body. Nitric oxide limits plasmodium development in the midgut. This Anopheles stephensi (Indo-Pakistan malaria mosquito) protein is Nitric oxide synthase.